The sequence spans 428 residues: Nematode resistance protein-like HSPRO1 (428 aa).

Interacts with SNF4.

It localises to the cytoplasm. In terms of biological role, positive regulator of basal resistance. The chain is Nematode resistance protein-like HSPRO1 (HSPRO1) from Arabidopsis thaliana (Mouse-ear cress).